The chain runs to 466 residues: Adenosylhomocysteinase (466 aa).

Residues threonine 57, aspartate 132, and glutamate 192 each contribute to the substrate site. 193-195 contributes to the NAD(+) binding site; it reads TTT. Substrate is bound by residues lysine 222 and aspartate 226. NAD(+) is bound by residues asparagine 227, 256–261, glutamate 279, asparagine 314, 335–337, and asparagine 380; these read GYGDVG and IGH.

The protein belongs to the adenosylhomocysteinase family. Requires NAD(+) as cofactor.

The protein localises to the cytoplasm. It carries out the reaction S-adenosyl-L-homocysteine + H2O = L-homocysteine + adenosine. It participates in amino-acid biosynthesis; L-homocysteine biosynthesis; L-homocysteine from S-adenosyl-L-homocysteine: step 1/1. Its function is as follows. May play a key role in the regulation of the intracellular concentration of adenosylhomocysteine. The protein is Adenosylhomocysteinase of Rhizobium meliloti (strain 1021) (Ensifer meliloti).